Consider the following 845-residue polypeptide: Protein translocase subunit SecA 1 (845 aa).

Residues Gln-85, 103–107 (GEGKT), and Asp-492 each bind ATP.

This sequence belongs to the SecA family. As to quaternary structure, monomer and homodimer. Part of the essential Sec protein translocation apparatus which comprises SecA, SecYEG and auxiliary proteins SecDF. Other proteins may also be involved.

The protein resides in the cell membrane. The protein localises to the cytoplasm. It catalyses the reaction ATP + H2O + cellular proteinSide 1 = ADP + phosphate + cellular proteinSide 2.. Its function is as follows. Part of the Sec protein translocase complex. Interacts with the SecYEG preprotein conducting channel. Has a central role in coupling the hydrolysis of ATP to the transfer of proteins into and across the cell membrane, serving as an ATP-driven molecular motor driving the stepwise translocation of polypeptide chains across the membrane. This Corynebacterium glutamicum (strain ATCC 13032 / DSM 20300 / JCM 1318 / BCRC 11384 / CCUG 27702 / LMG 3730 / NBRC 12168 / NCIMB 10025 / NRRL B-2784 / 534) protein is Protein translocase subunit SecA 1.